The following is a 99-amino-acid chain: Cytochrome c oxidase subunit 4 isoform 1, mitochondrial (99 aa).

At 1–73 (SVVKREDFSL…TFAEMNRGSN (73 aa)) the chain is on the mitochondrial matrix side. Residue Lys4 is modified to N6-acetyllysine; alternate. Lys4 carries the N6-succinyllysine; alternate modification. Lys28 carries the N6-acetyllysine modification. Phosphoserine occurs at positions 31 and 33. An N6-acetyllysine; alternate modification is found at Lys35. Lys35 carries the post-translational modification N6-succinyllysine; alternate. The residue at position 42 (Lys42) is an N6-acetyllysine. A helical transmembrane segment spans residues 74–99 (EWKTVVGTATFFIGFTALIIMWQKRY).

It belongs to the cytochrome c oxidase IV family. Component of the cytochrome c oxidase (complex IV, CIV), a multisubunit enzyme composed of 14 subunits. The complex is composed of a catalytic core of 3 subunits MT-CO1, MT-CO2 and MT-CO3, encoded in the mitochondrial DNA, and 11 supernumerary subunits COX4I, COX5A, COX5B, COX6A, COX6B, COX6C, COX7A, COX7B, COX7C, COX8 and NDUFA4, which are encoded in the nuclear genome. The complex exists as a monomer or a dimer and forms supercomplexes (SCs) in the inner mitochondrial membrane with NADH-ubiquinone oxidoreductase (complex I, CI) and ubiquinol-cytochrome c oxidoreductase (cytochrome b-c1 complex, complex III, CIII), resulting in different assemblies (supercomplex SCI(1)III(2)IV(1) and megacomplex MCI(2)III(2)IV(2)). Interacts with PHB2; the interaction decreases in absence of SPHK2. Interacts with AFG1L. Interacts with ABCB7; this interaction allows the regulation of cellular iron homeostasis and cellular reactive oxygen species (ROS) levels in cardiomyocytes. Interacts with FLVCR2; this interaction occurs in the absence of heme and is disrupted upon heme binding. Interacts with IRGC.

It localises to the mitochondrion inner membrane. It participates in energy metabolism; oxidative phosphorylation. In terms of biological role, component of the cytochrome c oxidase, the last enzyme in the mitochondrial electron transport chain which drives oxidative phosphorylation. The respiratory chain contains 3 multisubunit complexes succinate dehydrogenase (complex II, CII), ubiquinol-cytochrome c oxidoreductase (cytochrome b-c1 complex, complex III, CIII) and cytochrome c oxidase (complex IV, CIV), that cooperate to transfer electrons derived from NADH and succinate to molecular oxygen, creating an electrochemical gradient over the inner membrane that drives transmembrane transport and the ATP synthase. Cytochrome c oxidase is the component of the respiratory chain that catalyzes the reduction of oxygen to water. Electrons originating from reduced cytochrome c in the intermembrane space (IMS) are transferred via the dinuclear copper A center (CU(A)) of subunit 2 and heme A of subunit 1 to the active site in subunit 1, a binuclear center (BNC) formed by heme A3 and copper B (CU(B)). The BNC reduces molecular oxygen to 2 water molecules using 4 electrons from cytochrome c in the IMS and 4 protons from the mitochondrial matrix. The chain is Cytochrome c oxidase subunit 4 isoform 1, mitochondrial (COX4I1) from Trachypithecus cristatus (Silvered leaf-monkey).